Reading from the N-terminus, the 265-residue chain is Hydroxyethylthiazole kinase (265 aa).

Residue methionine 36 coordinates substrate. ATP is bound by residues lysine 112 and serine 160. Glycine 187 serves as a coordination point for substrate.

The protein belongs to the Thz kinase family. Mg(2+) serves as cofactor.

It carries out the reaction 5-(2-hydroxyethyl)-4-methylthiazole + ATP = 4-methyl-5-(2-phosphooxyethyl)-thiazole + ADP + H(+). Its pathway is cofactor biosynthesis; thiamine diphosphate biosynthesis; 4-methyl-5-(2-phosphoethyl)-thiazole from 5-(2-hydroxyethyl)-4-methylthiazole: step 1/1. Functionally, catalyzes the phosphorylation of the hydroxyl group of 4-methyl-5-beta-hydroxyethylthiazole (THZ). In Clostridium perfringens (strain 13 / Type A), this protein is Hydroxyethylthiazole kinase.